A 314-amino-acid polypeptide reads, in one-letter code: Ribosomal RNA small subunit methyltransferase A (314 aa).

Positions 29, 31, 56, 77, 107, and 126 each coordinate S-adenosyl-L-methionine. Positions 291–314 (PKADDAGDDADAQAKADGAQVSTL) are disordered. The span at 303–314 (QAKADGAQVSTL) shows a compositional bias: low complexity.

Belongs to the class I-like SAM-binding methyltransferase superfamily. rRNA adenine N(6)-methyltransferase family. RsmA subfamily.

Its subcellular location is the cytoplasm. It catalyses the reaction adenosine(1518)/adenosine(1519) in 16S rRNA + 4 S-adenosyl-L-methionine = N(6)-dimethyladenosine(1518)/N(6)-dimethyladenosine(1519) in 16S rRNA + 4 S-adenosyl-L-homocysteine + 4 H(+). In terms of biological role, specifically dimethylates two adjacent adenosines (A1518 and A1519) in the loop of a conserved hairpin near the 3'-end of 16S rRNA in the 30S particle. May play a critical role in biogenesis of 30S subunits. The polypeptide is Ribosomal RNA small subunit methyltransferase A (Mycolicibacterium gilvum (strain PYR-GCK) (Mycobacterium gilvum (strain PYR-GCK))).